Reading from the N-terminus, the 247-residue chain is 2-amino-5-formylamino-6-ribosylaminopyrimidin-4(3H)-one 5'-monophosphate deformylase (247 aa).

Fe cation is bound by residues Glu41, His43, Asp52, and His121.

The protein belongs to the creatininase superfamily. FAPy deformylase family. In terms of assembly, homodimer. Fe(2+) is required as a cofactor. It depends on Zn(2+) as a cofactor.

The catalysed reaction is 2-amino-5-formylamino-6-(5-phospho-D-ribosylamino)pyrimidin-4(3H)-one + H2O = 2,5-diamino-6-(1-D-ribosylamino)pyrimidin-4(3H)-one 5'-phosphate + formate + H(+). It participates in cofactor biosynthesis; coenzyme F420 biosynthesis. The protein operates within cofactor biosynthesis; riboflavin biosynthesis. In terms of biological role, catalyzes the hydrolysis of the formamide of 2-amino-5-formylamino-6-ribosylamino-4(3H)-pyrimidinone 5'-monophosphate (FAPy) to form 2,5-diamino-6-ribosylamino-4(3H)-pyrimidinone 5'-phosphate (APy). In Methanothermus fervidus (strain ATCC 43054 / DSM 2088 / JCM 10308 / V24 S), this protein is 2-amino-5-formylamino-6-ribosylaminopyrimidin-4(3H)-one 5'-monophosphate deformylase.